The chain runs to 226 residues: MPLSNAQLAQTIDHTLLAPDASDAQIRELCRQAAEHRFYSVCVNSANVPLAARELADTGVLVCAVVGFPLGAGLSAAKAFEATVAIAAGAGEIDMVINIGALKSGRADDVKADIDAVHRACGAVPLKVILETGLLTDDEKVRVCEMCRDLGVAFVKTSTGFGHGGATLADVALMRRTVGPVLGVKASGGVRDRAAALAMIEAGATRLGTSSGVAIVTDQDGSASAY.

The active-site Proton donor/acceptor is the aspartate 94. Lysine 156 functions as the Schiff-base intermediate with acetaldehyde in the catalytic mechanism. Residue lysine 185 is the Proton donor/acceptor of the active site.

Belongs to the DeoC/FbaB aldolase family. DeoC type 1 subfamily.

The protein localises to the cytoplasm. It catalyses the reaction 2-deoxy-D-ribose 5-phosphate = D-glyceraldehyde 3-phosphate + acetaldehyde. The protein operates within carbohydrate degradation; 2-deoxy-D-ribose 1-phosphate degradation; D-glyceraldehyde 3-phosphate and acetaldehyde from 2-deoxy-alpha-D-ribose 1-phosphate: step 2/2. Catalyzes a reversible aldol reaction between acetaldehyde and D-glyceraldehyde 3-phosphate to generate 2-deoxy-D-ribose 5-phosphate. The sequence is that of Deoxyribose-phosphate aldolase from Burkholderia lata (strain ATCC 17760 / DSM 23089 / LMG 22485 / NCIMB 9086 / R18194 / 383).